Reading from the N-terminus, the 759-residue chain is Protein YdeP (759 aa).

Positions 49 and 52 each coordinate [4Fe-4S] cluster.

Belongs to the prokaryotic molybdopterin-containing oxidoreductase family. The cofactor is [4Fe-4S] cluster. Mo-bis(molybdopterin guanine dinucleotide) serves as cofactor.

In terms of biological role, probably involved in acid resistance. The chain is Protein YdeP (ydeP) from Escherichia coli O6:H1 (strain CFT073 / ATCC 700928 / UPEC).